The primary structure comprises 69 residues: Pancreatic secretory trypsin inhibitor (69 aa).

One can recognise a Kazal-like domain in the interval 8 to 65; that stretch reads TGTEAACSNYDLKKGCAKIFDPVCGTDNILYSNECLLCFQNLQRKTNVRIKRRGTCQE. 3 cysteine pairs are disulfide-bonded: cysteine 14/cysteine 45, cysteine 23/cysteine 42, and cysteine 31/cysteine 63.

It localises to the secreted. This is a trypsin inhibitor, its physiological function is to prevent the trypsin-catalyzed premature activation of zymogens within the pancreas. The polypeptide is Pancreatic secretory trypsin inhibitor (SPINK1) (Struthio camelus (Common ostrich)).